A 21-amino-acid polypeptide reads, in one-letter code: Peptide Hact-2 (21 aa).

Intrachain disulfides connect C1–C18, C5–C14, and C9–C20.

In terms of tissue distribution, expressed in tentacles.

It is found in the nematocyst. It localises to the secreted. In terms of biological role, peptide of unknown function. Does not exhibit antimicrobial activity against Escherichia coli and Staphylococcus aureus. Promotes cell proliferation of human fibroblast skin cells. Does not exhibit any effect on voltage-gated ion channels, including potassium, sodium, and calcium channels. The polypeptide is Peptide Hact-2 (Heliofungia actiniformis (Mushroom coral)).